We begin with the raw amino-acid sequence, 334 residues long: Isopentenyl-diphosphate delta-isomerase (334 aa).

Substrate is bound at residue 5–6; sequence RK. FMN-binding positions include 60 to 62, Ser90, and Asn117; that span reads AMT. Gln147 provides a ligand contact to substrate. A Mg(2+)-binding site is contributed by Glu148. Residues Lys179, Ser204, Thr209, 253–255, and 274–275 each bind FMN; these read GVR and SR.

This sequence belongs to the IPP isomerase type 2 family. Homooctamer. Dimer of tetramers. FMN serves as cofactor. NADPH is required as a cofactor. Requires Mg(2+) as cofactor.

It is found in the cytoplasm. The catalysed reaction is isopentenyl diphosphate = dimethylallyl diphosphate. Involved in the biosynthesis of isoprenoids. Catalyzes the 1,3-allylic rearrangement of the homoallylic substrate isopentenyl (IPP) to its allylic isomer, dimethylallyl diphosphate (DMAPP). The polypeptide is Isopentenyl-diphosphate delta-isomerase (Streptococcus gordonii (strain Challis / ATCC 35105 / BCRC 15272 / CH1 / DL1 / V288)).